The chain runs to 115 residues: Large ribosomal subunit protein bL20 (115 aa).

Belongs to the bacterial ribosomal protein bL20 family.

Functionally, binds directly to 23S ribosomal RNA and is necessary for the in vitro assembly process of the 50S ribosomal subunit. It is not involved in the protein synthesizing functions of that subunit. The protein is Large ribosomal subunit protein bL20 of Mycoplasmoides gallisepticum (strain R(low / passage 15 / clone 2)) (Mycoplasma gallisepticum).